A 458-amino-acid polypeptide reads, in one-letter code: Periphilin-1 (458 aa).

Composition is skewed to basic and acidic residues over residues 1-18 (MWSE…ERAP) and 63-107 (EGRS…DGFR). 2 disordered regions span residues 1–51 (MWSE…SYNR) and 63–284 (EGRS…LFED). The Nuclear localization signal signature appears at 103–109 (RDGFRRK). A Glycyl lysine isopeptide (Lys-Gly) (interchain with G-Cter in SUMO2) cross-link involves residue Lys-109. Ser-110, Ser-114, Ser-133, and Ser-140 each carry phosphoserine. The span at 116-142 (YARERSPYKRDNTFFRESPVGRKDSPH) shows a compositional bias: basic and acidic residues. Residues 143 to 154 (SRSGSSVSSRSY) are compositionally biased toward low complexity. Lys-160 participates in a covalent cross-link: Glycyl lysine isopeptide (Lys-Gly) (interchain with G-Cter in SUMO2). 2 positions are modified to phosphoserine: Ser-161 and Ser-167. Lys-180 participates in a covalent cross-link: Glycyl lysine isopeptide (Lys-Gly) (interchain with G-Cter in SUMO2). Positions 181-194 (RQNEGNPERDKERP) are enriched in basic and acidic residues. Phosphoserine is present on Ser-197. Lys-199 is covalently cross-linked (Glycyl lysine isopeptide (Lys-Gly) (interchain with G-Cter in SUMO2)). Residues Ser-201 and Ser-205 each carry the phosphoserine modification. Over residues 205–215 (SPSSGSAVSSS) the composition is skewed to low complexity. Residues 217–230 (VLDKPSRLTEKELA) show a composition bias toward basic and acidic residues. Residue Lys-227 forms a Glycyl lysine isopeptide (Lys-Gly) (interchain with G-Cter in SUMO2) linkage. 2 positions are modified to N6-acetyllysine; alternate: Lys-235 and Lys-240. Glycyl lysine isopeptide (Lys-Gly) (interchain with G-Cter in SUMO2); alternate cross-links involve residues Lys-235 and Lys-240. A compositionally biased stretch (basic and acidic residues) spans 237 to 246 (AAEKLEKSDE). Ser-325 bears the Phosphoserine mark. Lys-328 is covalently cross-linked (Glycyl lysine isopeptide (Lys-Gly) (interchain with G-Cter in SUMO2)). The disordered stretch occupies residues 345–406 (GQTWQQVPPV…TQLRRTTGAP (62 aa)). Residues 377-386 (PQPPQAPQPL) are compositionally biased toward pro residues. Positions 388–398 (PRKKRVRRTTQ) are enriched in basic residues. Lys-453 is covalently cross-linked (Glycyl lysine isopeptide (Lys-Gly) (interchain with G-Cter in SUMO2)).

Homodimer. Component of the HUSH complex; at least composed of TASOR, PPHLN1 and MPHOSPH8. Interacts with SIN3A and HDAC1. May interact with PPL. Substrate of transglutaminase (in vitro). In terms of tissue distribution, ubiquitous.

The protein localises to the nucleus. Its subcellular location is the cytoplasm. The protein resides in the chromosome. Functionally, component of the HUSH complex, a multiprotein complex that mediates epigenetic repression. The HUSH complex is recruited to genomic loci rich in H3K9me3 and is probably required to maintain transcriptional silencing by promoting recruitment of SETDB1, a histone methyltransferase that mediates further deposition of H3K9me3. In the HUSH complex, contributes to the maintenance of the complex at chromatin. Acts as a transcriptional corepressor and regulates the cell cycle, probably via the HUSH complex. The HUSH complex is also involved in the silencing of unintegrated retroviral DNA: some part of the retroviral DNA formed immediately after infection remains unintegrated in the host genome and is transcriptionally repressed. May be involved in epithelial differentiation by contributing to epidermal integrity and barrier formation. The sequence is that of Periphilin-1 from Homo sapiens (Human).